Reading from the N-terminus, the 348-residue chain is Dihydroorotate dehydrogenase (quinone) (348 aa).

FMN contacts are provided by residues 65–69 (AGMDK) and T89. Residue K69 coordinates substrate. A substrate-binding site is contributed by 114 to 118 (NRMGF). Residues N143 and N176 each contribute to the FMN site. N176 lines the substrate pocket. The Nucleophile role is filled by S179. N181 contacts substrate. FMN contacts are provided by K221 and T249. Substrate is bound at residue 250–251 (NT). FMN contacts are provided by residues G272, G301, and 322–323 (YT).

The protein belongs to the dihydroorotate dehydrogenase family. Type 2 subfamily. As to quaternary structure, monomer. FMN serves as cofactor.

It localises to the cell membrane. The enzyme catalyses (S)-dihydroorotate + a quinone = orotate + a quinol. It participates in pyrimidine metabolism; UMP biosynthesis via de novo pathway; orotate from (S)-dihydroorotate (quinone route): step 1/1. Catalyzes the conversion of dihydroorotate to orotate with quinone as electron acceptor. In Akkermansia muciniphila (strain ATCC BAA-835 / DSM 22959 / JCM 33894 / BCRC 81048 / CCUG 64013 / CIP 107961 / Muc), this protein is Dihydroorotate dehydrogenase (quinone).